The chain runs to 176 residues: Probable inosine/xanthosine triphosphatase (176 aa).

Residue D36 participates in Mg(2+) binding.

It belongs to the YjjX NTPase family. Homodimer. Mg(2+) serves as cofactor. Requires Mn(2+) as cofactor.

It carries out the reaction XTP + H2O = XDP + phosphate + H(+). The enzyme catalyses ITP + H2O = IDP + phosphate + H(+). Phosphatase that hydrolyzes non-canonical purine nucleotides such as XTP and ITP to their respective diphosphate derivatives. Probably excludes non-canonical purines from DNA/RNA precursor pool, thus preventing their incorporation into DNA/RNA and avoiding chromosomal lesions. The sequence is that of Probable inosine/xanthosine triphosphatase from Saccharolobus islandicus (strain Y.G.57.14 / Yellowstone #1) (Sulfolobus islandicus).